A 141-amino-acid polypeptide reads, in one-letter code: Putative nickel-responsive regulator (141 aa).

Residues His-80, His-91, His-93, and Cys-99 each coordinate Ni(2+).

This sequence belongs to the transcriptional regulatory CopG/NikR family. Ni(2+) is required as a cofactor.

In terms of biological role, transcriptional regulator. This Methanococcus vannielii (strain ATCC 35089 / DSM 1224 / JCM 13029 / OCM 148 / SB) protein is Putative nickel-responsive regulator.